A 64-amino-acid chain; its full sequence is Temporin-ALf (64 aa).

The signal sequence occupies residues 1-22 (MFTLKKSLLLLFFLGTINLSLC). Residues 23–46 (EQERNAEEERRDEPDERNAEVEKR) constitute a propeptide that is removed on maturation. A Leucine amide modification is found at Leu62.

Expressed by the skin glands.

The protein localises to the secreted. In terms of biological role, antimicrobial peptide with activity against Gram-positive and Gram-negative bacteria and against fungi. Has been tested against S.aureus (MIC=2.5 ug/mL), B.pumilus (MIC=5.0 ug/mL), B.cereus (MIC=30.0 ug/mL), E.coli (MIC=2.5 ug/mL), B.dysenteriae (MIC=5.0 ug/mL), A.cacoaceticus (MIC=30.0 ug/mL), P.aeruginosa (MIC=5.0 ug/mL) and C.albicans (MIC=2.5 ug/mL). Also shows a weak hemolytic activity. This is Temporin-ALf from Amolops loloensis (Lolokou Sucker Frog).